The sequence spans 499 residues: Probable cytosol aminopeptidase (499 aa).

2 residues coordinate Mn(2+): lysine 267 and aspartate 272. Residue lysine 279 is part of the active site. Mn(2+) contacts are provided by aspartate 290, aspartate 349, and glutamate 351. Arginine 353 is an active-site residue.

It belongs to the peptidase M17 family. It depends on Mn(2+) as a cofactor.

Its subcellular location is the cytoplasm. The enzyme catalyses Release of an N-terminal amino acid, Xaa-|-Yaa-, in which Xaa is preferably Leu, but may be other amino acids including Pro although not Arg or Lys, and Yaa may be Pro. Amino acid amides and methyl esters are also readily hydrolyzed, but rates on arylamides are exceedingly low.. It carries out the reaction Release of an N-terminal amino acid, preferentially leucine, but not glutamic or aspartic acids.. In terms of biological role, presumably involved in the processing and regular turnover of intracellular proteins. Catalyzes the removal of unsubstituted N-terminal amino acids from various peptides. The protein is Probable cytosol aminopeptidase of Alkaliphilus oremlandii (strain OhILAs) (Clostridium oremlandii (strain OhILAs)).